The sequence spans 92 residues: Small ribosomal subunit protein bS20 (92 aa).

The interval 1–25 is disordered; it reads MANSAQARKRARQAAKANSHNSALR.

It belongs to the bacterial ribosomal protein bS20 family.

In terms of biological role, binds directly to 16S ribosomal RNA. The polypeptide is Small ribosomal subunit protein bS20 (Burkholderia mallei (strain NCTC 10247)).